A 129-amino-acid polypeptide reads, in one-letter code: UPF0325 protein YPTS_3127 (129 aa).

This sequence belongs to the UPF0325 family.

The sequence is that of UPF0325 protein YPTS_3127 from Yersinia pseudotuberculosis serotype IB (strain PB1/+).